The sequence spans 622 residues: Kinesin light chain 2 (622 aa).

Residues 78–143 (ILALSSHLGA…KQHLLFMSQI (66 aa)) adopt a coiled-coil conformation. Basic and acidic residues predominate over residues 145–164 (KLDEDASPNEEKGDVPKDTL). Positions 145–191 (KLDEDASPNEEKGDVPKDTLDDLFPNEDEQSPAPSPGGGDVSGQHGG) are disordered. 3 positions are modified to phosphoserine: Ser-151, Ser-175, and Ser-179. Residues 180–190 (PGGGDVSGQHG) are compositionally biased toward gly residues. TPR repeat units lie at residues 198–231 (LRTL…LEKT), 240–273 (ATML…REKT), 282–315 (AATL…REKV), 324–357 (AKQL…YATR), and 366–399 (AKTK…AHEK). Phosphoserine is present on Ser-445. The stretch at 449-482 (NTTLRSLGALYRRQGKLEAAHTLEDCASRNRKQG) is one TPR 6 repeat. Disordered stretches follow at residues 476 to 548 (SRNR…SFGK) and 563 to 622 (KLQG…SLVG). Positions 493-509 (ELLKDGSGRRGDRRSSR) are enriched in basic and acidic residues. 2 positions are modified to phosphoserine: Ser-508 and Ser-521. The span at 538 to 547 (GSLRRSGSFG) shows a compositional bias: low complexity. A phosphoserine mark is found at Ser-581, Ser-582, Ser-589, Ser-608, Ser-610, and Ser-615. Positions 601–622 (LSDSRTLSSSSMDLSRRSSLVG) are enriched in low complexity.

It belongs to the kinesin light chain family. Oligomeric complex composed of two heavy chains and two light chains. Interacts (via TPR repeats) with PLEKHM2.

It localises to the cytoplasm. The protein localises to the cytoskeleton. Its subcellular location is the lysosome membrane. In terms of biological role, kinesin is a microtubule-associated force-producing protein that plays a role in organelle transport. The light chain functions in coupling of cargo to the heavy chain or in the modulation of its ATPase activity. Through binding with PLEKHM2 and ARL8B, recruits kinesin-1 to lysosomes and hence direct lysosomes movement toward microtubule plus ends. This Homo sapiens (Human) protein is Kinesin light chain 2.